An 89-amino-acid chain; its full sequence is Large ribosomal subunit protein bL27 (89 aa).

The disordered stretch occupies residues 1–22 (MAHKKAGGSSRNGRDSAGRRLG).

This sequence belongs to the bacterial ribosomal protein bL27 family.

This chain is Large ribosomal subunit protein bL27, found in Sphingopyxis alaskensis (strain DSM 13593 / LMG 18877 / RB2256) (Sphingomonas alaskensis).